Reading from the N-terminus, the 307-residue chain is Yop proteins translocation protein Q (307 aa).

Belongs to the FliN/MopA/SpaO family.

Functionally, component of the Yop secretion machinery. This is Yop proteins translocation protein Q (yscQ) from Yersinia pestis.